A 459-amino-acid polypeptide reads, in one-letter code: Vacuolar amino acid transporter 5 (459 aa).

8 helical membrane passes run Gly8–Phe28, Leu33–Leu53, Val82–Ile102, Phe131–Phe151, Ala161–Val181, Leu206–Ile226, Ile240–Tyr260, and Ser278–Leu298. A compositionally biased stretch (polar residues) spans Phe335–Glu351. Positions Phe335 to Leu354 are disordered. 3 consecutive transmembrane segments (helical) span residues Ile364–Ala384, Val386–Phe406, and Leu434–Leu454.

It belongs to the amino acid/polyamine transporter 2 family.

It localises to the vacuole membrane. Its function is as follows. Probable amino acid transporter of unknown specificity. The chain is Vacuolar amino acid transporter 5 (AVT5) from Saccharomyces cerevisiae (strain ATCC 204508 / S288c) (Baker's yeast).